Reading from the N-terminus, the 2511-residue chain is Chromodomain-helicase-DNA-binding protein 8 (2511 aa).

A disordered region spans residues 484 to 615 (PRVLNQDELP…RSNRQVKRKK (132 aa)). A compositionally biased stretch (gly residues) spans 515-524 (GGGVGGGGGG). Residues 604 to 615 (KRRSNRQVKRKK) are compositionally biased toward basic residues. Chromo domains follow at residues 680-745 (AIVD…AQMR) and 760-826 (VEVD…RTPR). The Helicase ATP-binding domain maps to 859–1033 (LFNWYNRQNC…FSLLHFLEPA (175 aa)). Position 872-879 (872-879 (DEMGLGKT)) interacts with ATP. Residues 984–987 (DEAH) carry the DEAH box motif. Residues 1174–1330 (LLDKLLPRLK…SMSGNKESSI (157 aa)) form the Helicase C-terminal domain. Disordered stretches follow at residues 1440–1482 (TRQF…HSGG), 1715–1736 (EQQAADPELGEGGDYDKYSEDP), 2086–2168 (SKNN…LTDP), and 2468–2511 (PSAL…SSED). A compositionally biased stretch (acidic residues) spans 1452–1461 (DLSDLDSDDD). Low complexity predominate over residues 2111–2125 (DSGSSSSSRHSGSSD).

This sequence belongs to the SNF2/RAD54 helicase family. CHD8 subfamily. In terms of assembly, component of some MLL1/MLL complex.

The protein resides in the nucleus. The catalysed reaction is ATP + H2O = ADP + phosphate + H(+). Its function is as follows. ATP-dependent chromatin-remodeling factor, it slides nucleosomes along DNA; nucleosome sliding requires ATP. Acts as a transcription repressor by remodeling chromatin structure and recruiting histone H1 to target genes. Suppresses p53/tp53-mediated apoptosis by recruiting histone H1 and preventing p53/tp53 transactivation activity. Acts as a negative regulator of Wnt signaling pathway by regulating beta-catenin (ctnnb1) activity. Negatively regulates ctnnb1-targeted gene expression by being recruited specifically to the promoter regions of several ctnnb1 responsive genes. May also act as a transcription activator by participating in efficient U6 RNA polymerase III transcription. The sequence is that of Chromodomain-helicase-DNA-binding protein 8 from Danio rerio (Zebrafish).